Here is a 219-residue protein sequence, read N- to C-terminus: Ribosomal RNA small subunit methyltransferase G (219 aa).

S-adenosyl-L-methionine contacts are provided by Gly81, Leu86, and Arg150.

This sequence belongs to the methyltransferase superfamily. RNA methyltransferase RsmG family.

It is found in the cytoplasm. The catalysed reaction is guanosine(527) in 16S rRNA + S-adenosyl-L-methionine = N(7)-methylguanosine(527) in 16S rRNA + S-adenosyl-L-homocysteine. Specifically methylates the N7 position of guanine in position 527 of 16S rRNA. The polypeptide is Ribosomal RNA small subunit methyltransferase G (Magnetococcus marinus (strain ATCC BAA-1437 / JCM 17883 / MC-1)).